The sequence spans 445 residues: Trigger factor (445 aa).

The PPIase FKBP-type domain occupies 162–247 (GDQVTIDAIG…IKAVHTAEPT (86 aa)).

It belongs to the FKBP-type PPIase family. Tig subfamily.

It is found in the cytoplasm. The enzyme catalyses [protein]-peptidylproline (omega=180) = [protein]-peptidylproline (omega=0). Involved in protein export. Acts as a chaperone by maintaining the newly synthesized protein in an open conformation. Functions as a peptidyl-prolyl cis-trans isomerase. This Rickettsia conorii (strain ATCC VR-613 / Malish 7) protein is Trigger factor.